The following is a 249-amino-acid chain: tRNA (guanine-N(1)-)-methyltransferase (249 aa).

S-adenosyl-L-methionine-binding positions include Gly113 and 133 to 138; that span reads IGDYVL.

It belongs to the RNA methyltransferase TrmD family. Homodimer.

Its subcellular location is the cytoplasm. The enzyme catalyses guanosine(37) in tRNA + S-adenosyl-L-methionine = N(1)-methylguanosine(37) in tRNA + S-adenosyl-L-homocysteine + H(+). In terms of biological role, specifically methylates guanosine-37 in various tRNAs. The sequence is that of tRNA (guanine-N(1)-)-methyltransferase from Aeromonas hydrophila subsp. hydrophila (strain ATCC 7966 / DSM 30187 / BCRC 13018 / CCUG 14551 / JCM 1027 / KCTC 2358 / NCIMB 9240 / NCTC 8049).